The chain runs to 398 residues: S-adenosylmethionine synthase (398 aa).

Residue His-16 coordinates ATP. Asp-18 is a binding site for Mg(2+). Residue Glu-51 participates in K(+) binding. L-methionine-binding residues include Glu-64 and Gln-108. The tract at residues 108 to 118 (QSADIAQGVDA) is flexible loop. Residues 176–178 (DSK), 242–243 (KF), Asp-251, 257–258 (RK), Ala-274, and Lys-278 contribute to the ATP site. Asp-251 is an L-methionine binding site. An L-methionine-binding site is contributed by Lys-282.

Belongs to the AdoMet synthase family. Homotetramer; dimer of dimers. Requires Mg(2+) as cofactor. It depends on K(+) as a cofactor.

It is found in the cytoplasm. It carries out the reaction L-methionine + ATP + H2O = S-adenosyl-L-methionine + phosphate + diphosphate. It participates in amino-acid biosynthesis; S-adenosyl-L-methionine biosynthesis; S-adenosyl-L-methionine from L-methionine: step 1/1. In terms of biological role, catalyzes the formation of S-adenosylmethionine (AdoMet) from methionine and ATP. The overall synthetic reaction is composed of two sequential steps, AdoMet formation and the subsequent tripolyphosphate hydrolysis which occurs prior to release of AdoMet from the enzyme. The protein is S-adenosylmethionine synthase of Bradyrhizobium diazoefficiens (strain JCM 10833 / BCRC 13528 / IAM 13628 / NBRC 14792 / USDA 110).